An 86-amino-acid chain; its full sequence is Putative defensin-like protein 9 (86 aa).

The signal sequence occupies residues 1–29 (MKSSMQLISTLFFLVILVVAPGMKMVVEG). The residue at position 30 (glutamine 30) is a Pyrrolidone carboxylic acid. Intrachain disulfides connect cysteine 34–cysteine 79, cysteine 45–cysteine 65, cysteine 51–cysteine 73, and cysteine 55–cysteine 75.

Belongs to the DEFL family.

It localises to the secreted. This chain is Putative defensin-like protein 9 (LCR76), found in Arabidopsis thaliana (Mouse-ear cress).